Reading from the N-terminus, the 195-residue chain is Ras-related protein Rab-31 (195 aa).

GTP is bound by residues Gly16, Gly18, Lys19, Ser20, Ser21, Asp32, and His33. Ser20 provides a ligand contact to Mg(2+). 2 consecutive short sequence motifs (switch) follow at residues 30–42 (HFDH…IGAS) and 63–79 (AGQE…YRGS). Phosphoserine is present on Ser36. GTP is bound by residues Thr38, Gly64, Asn119, Asp122, Ala150, and Lys151. Mg(2+) is bound at residue Thr38. Residues Cys194 and Cys195 are each lipidated (S-geranylgeranyl cysteine).

Belongs to the small GTPase superfamily. Rab family. In terms of assembly, interacts with OCRL. Interacts with NGFR. Interacts (in GDP-bound form) with RIN3 and GAPVD1, which function as guanine exchange factors (GEF). Interacts (in GTP-bound form) with EEA1. Interacts with EGFR. Interacts (in GTP-bound form) with APPL2; interaction contributes to or enhances recruitment of APPL2 to the phagosomes; interaction enhances Fc-gamma receptor-mediated phagocytosis through PI3K/Akt signaling in macrophages. Mg(2+) is required as a cofactor. As to expression, highest expression in placenta and brain with lower levels in heart and lung. Not detected in liver, skeletal muscle, kidney or pancreas.

The protein resides in the golgi apparatus. The protein localises to the trans-Golgi network. Its subcellular location is the trans-Golgi network membrane. It localises to the early endosome. It is found in the cytoplasmic vesicle. The protein resides in the phagosome. The protein localises to the phagosome membrane. It catalyses the reaction GTP + H2O = GDP + phosphate + H(+). With respect to regulation, regulated by guanine nucleotide exchange factors (GEFs) including RIN3 and GAPVD1 which promote the exchange of bound GDP for free GTP. Regulated by GTPase activating proteins (GAPs) which increase the GTP hydrolysis activity. Inhibited by GDP dissociation inhibitors (GDIs) which prevent Rab-GDP dissociation. Functionally, the small GTPases Rab are key regulators of intracellular membrane trafficking, from the formation of transport vesicles to their fusion with membranes. Rabs cycle between an inactive GDP-bound form and an active GTP-bound form that is able to recruit to membranes different set of downstream effectors directly responsible for vesicle formation, movement, tethering and fusion. Required for the integrity and for normal function of the Golgi apparatus and the trans-Golgi network. Plays a role in insulin-stimulated translocation of GLUT4 to the cell membrane. Plays a role in M6PR transport from the trans-Golgi network to endosomes. Plays a role in the internalization of EGFR from the cell membrane into endosomes. Plays a role in the maturation of phagosomes that engulf pathogens, such as S.aureus and M.tuberculosis. The polypeptide is Ras-related protein Rab-31 (Homo sapiens (Human)).